The sequence spans 1755 residues: Transposon Ty1-ER1 Gag-Pol polyprotein (1755 aa).

Polar residues-rich tracts occupy residues 1–23 (MESQ…SVTS), 48–60 (TKAN…TPAS), and 127–152 (QSQF…GNTF). Disordered regions lie at residues 1-93 (MESQ…MMTQ), 126-174 (PQSQ…PPPM), and 352-421 (GSRN…SKST). Over residues 153-165 (TDSSSADSDMTST) the composition is skewed to low complexity. The interval 299-401 (NNGIHINNKV…NSKSKTARAH (103 aa)) is RNA-binding. Positions 402–418 (NVSTSNNSPSTDNDSIS) are enriched in low complexity. Residue serine 416 is modified to Phosphoserine. Aspartate 461 serves as the catalytic For protease activity; shared with dimeric partner. Positions 583–640 (NVHTSESTRKYPYPFIHRMLAHANAQTIRYSLKNNTITYFNESDVDWSSAIDYQCPDC) are integrase-type zinc finger-like. The Integrase catalytic domain maps to 660 to 835 (NSYEPFQYLH…AGLDISTLLP (176 aa)). Positions 671 and 736 each coordinate Mg(2+). Disordered regions lie at residues 956-1087 (SKAV…ETEK), 1092-1111 (RSPS…NIVP), and 1130-1171 (DLPL…DSNA). Residues 960 to 969 (SPTDSTPPST) are compositionally biased toward low complexity. Polar residues predominate over residues 1005-1015 (STPQISNIEST). Residues 1038 to 1053 (ESSHASKSKDFRHSDS) show a composition bias toward basic and acidic residues. 2 stretches are compositionally biased toward polar residues: residues 1054–1082 (YSEN…QISD) and 1101–1111 (PENNSSHNIVP). A Bipartite nuclear localization signal motif is present at residues 1178–1212 (KKRSLEDNETEIKVSRDTWNTKNMRSLEPPRSKKR). One can recognise a Reverse transcriptase Ty1/copia-type domain in the interval 1338 to 1476 (NNYYITQLDI…DILGLEIKYQ (139 aa)). Positions 1346, 1427, 1428, 1610, 1652, and 1685 each coordinate Mg(2+). The region spanning 1610-1752 (DASYGNQPYY…IKTFKLLTNK (143 aa)) is the RNase H Ty1/copia-type domain.

The capsid protein forms a homotrimer, from which the VLPs are assembled. The protease is a homodimer, whose active site consists of two apposed aspartic acid residues. In terms of processing, initially, virus-like particles (VLPs) are composed of the structural unprocessed proteins Gag and Gag-Pol, and also contain the host initiator methionine tRNA (tRNA(i)-Met) which serves as a primer for minus-strand DNA synthesis, and a dimer of genomic Ty RNA. Processing of the polyproteins occurs within the particle and proceeds by an ordered pathway, called maturation. First, the protease (PR) is released by autocatalytic cleavage of the Gag-Pol polyprotein yielding capsid protein p45 and a Pol-p154 precursor protein. This cleavage is a prerequisite for subsequent processing of Pol-p154 at the remaining sites to release the mature structural and catalytic proteins. Maturation takes place prior to the RT reaction and is required to produce transposition-competent VLPs.

Its subcellular location is the cytoplasm. The protein resides in the nucleus. The catalysed reaction is DNA(n) + a 2'-deoxyribonucleoside 5'-triphosphate = DNA(n+1) + diphosphate. It catalyses the reaction Endonucleolytic cleavage to 5'-phosphomonoester.. Functionally, capsid protein (CA) is the structural component of the virus-like particle (VLP), forming the shell that encapsulates the retrotransposons dimeric RNA genome. The particles are assembled from trimer-clustered units and there are holes in the capsid shells that allow for the diffusion of macromolecules. CA also has nucleocapsid-like chaperone activity, promoting primer tRNA(i)-Met annealing to the multipartite primer-binding site (PBS), dimerization of Ty1 RNA and initiation of reverse transcription. Its function is as follows. The aspartyl protease (PR) mediates the proteolytic cleavages of the Gag and Gag-Pol polyproteins after assembly of the VLP. In terms of biological role, reverse transcriptase/ribonuclease H (RT) is a multifunctional enzyme that catalyzes the conversion of the retro-elements RNA genome into dsDNA within the VLP. The enzyme displays a DNA polymerase activity that can copy either DNA or RNA templates, and a ribonuclease H (RNase H) activity that cleaves the RNA strand of RNA-DNA heteroduplexes during plus-strand synthesis and hydrolyzes RNA primers. The conversion leads to a linear dsDNA copy of the retrotransposon that includes long terminal repeats (LTRs) at both ends. Integrase (IN) targets the VLP to the nucleus, where a subparticle preintegration complex (PIC) containing at least integrase and the newly synthesized dsDNA copy of the retrotransposon must transit the nuclear membrane. Once in the nucleus, integrase performs the integration of the dsDNA into the host genome. In Saccharomyces cerevisiae (strain ATCC 204508 / S288c) (Baker's yeast), this protein is Transposon Ty1-ER1 Gag-Pol polyprotein (TY1B-ER1).